We begin with the raw amino-acid sequence, 130 residues long: Aspartate 1-decarboxylase (130 aa).

The Schiff-base intermediate with substrate; via pyruvic acid role is filled by S25. Residue S25 is modified to Pyruvic acid (Ser). T57 contacts substrate. Y58 serves as the catalytic Proton donor. 73–75 is a binding site for substrate; it reads GAT.

It belongs to the PanD family. In terms of assembly, heterooctamer of four alpha and four beta subunits. Requires pyruvate as cofactor. Post-translationally, is synthesized initially as an inactive proenzyme, which is activated by self-cleavage at a specific serine bond to produce a beta-subunit with a hydroxyl group at its C-terminus and an alpha-subunit with a pyruvoyl group at its N-terminus.

The protein localises to the cytoplasm. The enzyme catalyses L-aspartate + H(+) = beta-alanine + CO2. It participates in cofactor biosynthesis; (R)-pantothenate biosynthesis; beta-alanine from L-aspartate: step 1/1. In terms of biological role, catalyzes the pyruvoyl-dependent decarboxylation of aspartate to produce beta-alanine. The chain is Aspartate 1-decarboxylase from Lactiplantibacillus plantarum (strain ATCC BAA-793 / NCIMB 8826 / WCFS1) (Lactobacillus plantarum).